Reading from the N-terminus, the 382-residue chain is Succinate--CoA ligase [ADP-forming] subunit beta (382 aa).

In terms of domain architecture, ATP-grasp spans 9-237 (KQVFADAGIP…AAEGDELEQK (229 aa)). Residues K45, 52–54 (GRG), E91, V94, and E99 contribute to the ATP site. Residues N191 and D205 each coordinate Mg(2+). Substrate-binding positions include N257 and 314-316 (GIT).

Belongs to the succinate/malate CoA ligase beta subunit family. In terms of assembly, heterotetramer of two alpha and two beta subunits. Mg(2+) serves as cofactor.

It carries out the reaction succinate + ATP + CoA = succinyl-CoA + ADP + phosphate. The catalysed reaction is GTP + succinate + CoA = succinyl-CoA + GDP + phosphate. Its pathway is carbohydrate metabolism; tricarboxylic acid cycle; succinate from succinyl-CoA (ligase route): step 1/1. Its function is as follows. Succinyl-CoA synthetase functions in the citric acid cycle (TCA), coupling the hydrolysis of succinyl-CoA to the synthesis of either ATP or GTP and thus represents the only step of substrate-level phosphorylation in the TCA. The beta subunit provides nucleotide specificity of the enzyme and binds the substrate succinate, while the binding sites for coenzyme A and phosphate are found in the alpha subunit. The sequence is that of Succinate--CoA ligase [ADP-forming] subunit beta from Haloarcula marismortui (strain ATCC 43049 / DSM 3752 / JCM 8966 / VKM B-1809) (Halobacterium marismortui).